Here is a 421-residue protein sequence, read N- to C-terminus: ATP-dependent RNA helicase RhlB (421 aa).

Positions 9–37 match the Q motif motif; it reads QKFSDFALHPQVVEALEKKGFYNCTPIQA. One can recognise a Helicase ATP-binding domain in the interval 40–219; it reads LPLTLAGRDV…FEQMNNAEYV (180 aa). 53–60 contributes to the ATP binding site; the sequence is AQTGTGKT. The short motif at 165 to 168 is the DEAD box element; it reads DEAD. Residues 245-390 enclose the Helicase C-terminal domain; the sequence is RLLQTLIEEE…VSKYNPEALM (146 aa). The interval 396 to 421 is disordered; sequence PLRLTRSRPGNGPRRAGAPRNRRRSG. Residues 402-414 show a composition bias toward low complexity; it reads SRPGNGPRRAGAP.

This sequence belongs to the DEAD box helicase family. RhlB subfamily. As to quaternary structure, component of the RNA degradosome, which is a multiprotein complex involved in RNA processing and mRNA degradation.

The protein resides in the cytoplasm. It catalyses the reaction ATP + H2O = ADP + phosphate + H(+). In terms of biological role, DEAD-box RNA helicase involved in RNA degradation. Has RNA-dependent ATPase activity and unwinds double-stranded RNA. In Salmonella agona (strain SL483), this protein is ATP-dependent RNA helicase RhlB.